Here is a 147-residue protein sequence, read N- to C-terminus: Protein-export protein SecB 2 (147 aa).

It belongs to the SecB family. In terms of assembly, homotetramer, a dimer of dimers. One homotetramer interacts with 1 SecA dimer.

It is found in the cytoplasm. In terms of biological role, one of the proteins required for the normal export of preproteins out of the cell cytoplasm. It is a molecular chaperone that binds to a subset of precursor proteins, maintaining them in a translocation-competent state. It also specifically binds to its receptor SecA. This chain is Protein-export protein SecB 2, found in Francisella tularensis subsp. holarctica (strain FTNF002-00 / FTA).